The sequence spans 277 residues: Formamidopyrimidine-DNA glycosylase (277 aa).

The active-site Schiff-base intermediate with DNA is the Pro-2. Glu-3 acts as the Proton donor in catalysis. Residue Lys-59 is the Proton donor; for beta-elimination activity of the active site. DNA contacts are provided by His-94 and Arg-113. The FPG-type zinc-finger motif lies at 241 to 275 (KIHGKKGKQCQSCNTTIIKKKINGRGSYICEKCQI). Arg-265 (proton donor; for delta-elimination activity) is an active-site residue.

This sequence belongs to the FPG family. In terms of assembly, monomer. Zn(2+) is required as a cofactor.

The enzyme catalyses Hydrolysis of DNA containing ring-opened 7-methylguanine residues, releasing 2,6-diamino-4-hydroxy-5-(N-methyl)formamidopyrimidine.. It catalyses the reaction 2'-deoxyribonucleotide-(2'-deoxyribose 5'-phosphate)-2'-deoxyribonucleotide-DNA = a 3'-end 2'-deoxyribonucleotide-(2,3-dehydro-2,3-deoxyribose 5'-phosphate)-DNA + a 5'-end 5'-phospho-2'-deoxyribonucleoside-DNA + H(+). Functionally, involved in base excision repair of DNA damaged by oxidation or by mutagenic agents. Acts as a DNA glycosylase that recognizes and removes damaged bases. Has a preference for oxidized purines, such as 7,8-dihydro-8-oxoguanine (8-oxoG). Has AP (apurinic/apyrimidinic) lyase activity and introduces nicks in the DNA strand. Cleaves the DNA backbone by beta-delta elimination to generate a single-strand break at the site of the removed base with both 3'- and 5'-phosphates. The sequence is that of Formamidopyrimidine-DNA glycosylase (mutM) from Mycoplasma pneumoniae (strain ATCC 29342 / M129 / Subtype 1) (Mycoplasmoides pneumoniae).